Reading from the N-terminus, the 727-residue chain is Pentatricopeptide repeat-containing protein At4g20740 (727 aa).

The tract at residues 1–84 (MKSPKPPNLS…PSPPSHSTVI (84 aa)) is disordered. The segment covering 38-56 (SNRQSIPRVSPQPQSNSLA) has biased composition (polar residues). Residues 59-70 (TPFDLRKWDPET) show a composition bias toward basic and acidic residues. PPR repeat units follow at residues 157-191 (DFAA…GRPP), 192-226 (SEKQ…GFKP), 227-261 (RVFL…GLVE), 262-296 (ESTT…LCKP), 297-331 (DVFA…EIKP), 332-366 (DVMA…QILI), 367-401 (DREI…GYIA), 402-436 (DIGI…ELEP), 437-471 (DFET…GYPV), 506-540 (SVSV…GFEP), 541-575 (DSSS…SCVP), 576-606 (SIAA…CLGN), 612-646 (MEFK…GVFI), and 647-681 (NEVI…KVMT).

Belongs to the PPR family. P subfamily.

The polypeptide is Pentatricopeptide repeat-containing protein At4g20740 (Arabidopsis thaliana (Mouse-ear cress)).